The chain runs to 137 residues: Acidic phospholipase A2 CC-PLA2-1 (137 aa).

The N-terminal stretch at 1–16 is a signal peptide; that stretch reads MRTLWIVAVWLMGVEG. 7 disulfide bridges follow: C42-C130, C44-C60, C59-C110, C65-C137, C66-C103, C73-C96, and C90-C101. Y43, G45, and G47 together coordinate Ca(2+). The active site involves H63. Residue D64 coordinates Ca(2+). Residue D104 is part of the active site.

Belongs to the phospholipase A2 family. Group II subfamily. D49 sub-subfamily. It depends on Ca(2+) as a cofactor. In terms of processing, glycosylated (2.5%). Expressed by the venom gland.

It is found in the secreted. It catalyses the reaction a 1,2-diacyl-sn-glycero-3-phosphocholine + H2O = a 1-acyl-sn-glycero-3-phosphocholine + a fatty acid + H(+). In terms of biological role, snake venom phospholipase A2 (PLA2) that inhibits blood coagulation and platelet aggregation induced by ADP and arachidonic acid. Inhibits tumor cell adhesion and migration in a dose-dependent manner. Abolishes the attachment of human brain microvascular endothelial cells (HBMEC) to fibrinogen (IC(50)=0.12 uM) and dramatically reduces its adhesion to fibronectin (IC(50)=0.12 uM), whereas no effect is observed on type I collagen, vitronectin or laminin 1. Also blocks the cell migration toward fibronectin and fibrinogen. These effects are not dependent of the catalytic activity, but are mediated by alpha-5/beta-1 (ITGA5/ITGB1) and alpha-v-containing (ITGAV) integrins. Also shows anti-angiogenic activity in chicken chorioallantoix membrane assay. Has a relatively high enzymatic activity. PLA2 catalyzes the calcium-dependent hydrolysis of the 2-acyl groups in 3-sn-phosphoglycerides. The sequence is that of Acidic phospholipase A2 CC-PLA2-1 from Cerastes cerastes (Horned desert viper).